The primary structure comprises 554 residues: MFCIQCEQTIRTPAGNGCSYSQGMCGKLAATSDLQDLLIYMLQGVSVYAVKARELGIVDAEIDSFVPKAFFSTLTNVNFDDERIVAYAQQAAKYRASLKAAYELACERAGKVAEQVPEVAQLVLGTSKVEMLSQAPIALLNKDKHEIHEDILGLRLLCLYGLKGAAAYMEHARVLDQTDAEVAGRFHEIMAFLGESSVDGDKLFATAMEIGQLNYRIMAMLDAGETQSFGHPEPTVVNTKSVKGKAILVSGHDMKDLELILEQTVGKGINVYTHGEMLPALAYPAFKKYPHLVGNYGSAWQNQQKEFANFPGAVVMTSNCIIDPNVGSYSDRIFTRSIVGWPGVMHIIGDDFSAVIDKALALEGFNYDEIPHKITIGFARNALMAAAPAVVENVKNGSIKHFFLVGGCDGDKADRSYFTELAKSTPKDSIILTLGCGKYKFNKLEFGDINGIPRLLDVGQCNDAYSAIQLAIALAEVFECDINELPLSLVLSWFEQKAIVVLLTLLSLGVKNIRTGPTPPAFLTANLAKILEDKFGLRNTTTVEADLKTMLNVA.

4 residues coordinate [2Fe-2S] cluster: C3, C6, C18, and C25. H252, E276, C320, C408, C436, C461, E495, and K497 together coordinate hybrid [4Fe-2O-2S] cluster. C408 carries the post-translational modification Cysteine persulfide.

Belongs to the HCP family. It depends on [2Fe-2S] cluster as a cofactor. The cofactor is hybrid [4Fe-2O-2S] cluster.

It localises to the cytoplasm. The catalysed reaction is A + NH4(+) + H2O = hydroxylamine + AH2 + H(+). Functionally, catalyzes the reduction of hydroxylamine to form NH(3) and H(2)O. In Shewanella putrefaciens (strain CN-32 / ATCC BAA-453), this protein is Hydroxylamine reductase.